Reading from the N-terminus, the 55-residue chain is Large ribosomal subunit protein bL33 (55 aa).

This sequence belongs to the bacterial ribosomal protein bL33 family.

The protein is Large ribosomal subunit protein bL33 of Roseobacter denitrificans (strain ATCC 33942 / OCh 114) (Erythrobacter sp. (strain OCh 114)).